Here is a 277-residue protein sequence, read N- to C-terminus: Proteasome subunit beta type-7 (277 aa).

The propeptide at 1–43 (MAAVSVYAPPVGGFSFDNCRRNAVLEADFAKRGYKLPKVRKTG) is removed in mature form. T44 acts as the Nucleophile in catalysis.

It belongs to the peptidase T1B family. As to quaternary structure, the 26S proteasome consists of a 20S proteasome core and two 19S regulatory subunits. The 20S proteasome core is a barrel-shaped complex made of 28 subunits that are arranged in four stacked rings. The two outer rings are each formed by seven alpha subunits, and the two inner rings are formed by seven beta subunits. The proteolytic activity is exerted by three beta-subunits PSMB5, PSMB6 and PSMB7. In terms of assembly, (Microbial infection) Interacts with HIV-1 Tat protein. As to expression, expressed at a low level in colonic mucosa. Up-regulated in colorectal cancer tissues.

The protein resides in the cytoplasm. The protein localises to the nucleus. It carries out the reaction Cleavage of peptide bonds with very broad specificity.. In terms of biological role, component of the 20S core proteasome complex involved in the proteolytic degradation of most intracellular proteins. This complex plays numerous essential roles within the cell by associating with different regulatory particles. Associated with two 19S regulatory particles, forms the 26S proteasome and thus participates in the ATP-dependent degradation of ubiquitinated proteins. The 26S proteasome plays a key role in the maintenance of protein homeostasis by removing misfolded or damaged proteins that could impair cellular functions, and by removing proteins whose functions are no longer required. Associated with the PA200 or PA28, the 20S proteasome mediates ubiquitin-independent protein degradation. This type of proteolysis is required in several pathways including spermatogenesis (20S-PA200 complex) or generation of a subset of MHC class I-presented antigenic peptides (20S-PA28 complex). Within the 20S core complex, PSMB7 displays a trypsin-like activity. The chain is Proteasome subunit beta type-7 from Homo sapiens (Human).